The sequence spans 436 residues: Protein translocase subunit SecY (436 aa).

Helical transmembrane passes span 17–37 (ILLT…PVPY), 72–92 (FGLL…IQLL), 122–142 (TFFW…EVIF), 146–166 (LQVY…VLWF), 209–229 (FSNI…CIYI), 269–289 (VMPL…FEII), 309–329 (ISYW…IFFF), and 380–400 (IFLI…NLNI).

The protein belongs to the SecY/SEC61-alpha family. As to quaternary structure, component of the plastid Sec protein translocase complex, which is composed of at least SecY and SecE.

The protein resides in the plastid. Its subcellular location is the chloroplast thylakoid membrane. In terms of biological role, the central subunit of the protein translocation channel SecYE. Consists of two halves. These two domains form a lateral gate at the front which open onto the bilayer between TMs 2 and 7, and are clamped together by SecE at the back. The channel is closed by both a pore ring composed of hydrophobic SecY resides and a short helix (helix 2A) on the extracellular side of the membrane which forms a plug. This is Protein translocase subunit SecY from Vaucheria litorea (Yellow-green alga).